A 416-amino-acid chain; its full sequence is Gamma-glutamyl phosphate reductase (416 aa).

Belongs to the gamma-glutamyl phosphate reductase family.

Its subcellular location is the cytoplasm. It carries out the reaction L-glutamate 5-semialdehyde + phosphate + NADP(+) = L-glutamyl 5-phosphate + NADPH + H(+). It functions in the pathway amino-acid biosynthesis; L-proline biosynthesis; L-glutamate 5-semialdehyde from L-glutamate: step 2/2. Catalyzes the NADPH-dependent reduction of L-glutamate 5-phosphate into L-glutamate 5-semialdehyde and phosphate. The product spontaneously undergoes cyclization to form 1-pyrroline-5-carboxylate. In Streptococcus thermophilus (strain ATCC BAA-491 / LMD-9), this protein is Gamma-glutamyl phosphate reductase.